The following is a 403-amino-acid chain: Phospholipase A1-II 2 (403 aa).

Catalysis depends on serine 218, which acts as the Acyl-ester intermediate. Catalysis depends on charge relay system residues serine 218, aspartate 286, and histidine 323. Residues glycine 381–aspartate 403 form a disordered region. A compositionally biased stretch (acidic residues) spans glutamate 392–aspartate 403.

It belongs to the AB hydrolase superfamily. Lipase family.

It localises to the cytoplasm. Its function is as follows. Acylhydrolase that catalyzes the hydrolysis of phospholipids at the sn-1 position. The chain is Phospholipase A1-II 2 from Oryza sativa subsp. indica (Rice).